We begin with the raw amino-acid sequence, 154 residues long: Peptide methionine sulfoxide reductase MsrB (154 aa).

In terms of domain architecture, MsrB spans 28–150; sequence DQQWREQLSE…NSVSLIFNKI (123 aa). Residues Cys67, Cys70, Cys116, and Cys119 each contribute to the Zn(2+) site. Cys139 serves as the catalytic Nucleophile.

This sequence belongs to the MsrB Met sulfoxide reductase family. Requires Zn(2+) as cofactor.

The catalysed reaction is L-methionyl-[protein] + [thioredoxin]-disulfide + H2O = L-methionyl-(R)-S-oxide-[protein] + [thioredoxin]-dithiol. The chain is Peptide methionine sulfoxide reductase MsrB from Vibrio vulnificus (strain CMCP6).